Consider the following 408-residue polypeptide: Serine/threonine transporter SstT (408 aa).

9 consecutive transmembrane segments (helical) span residues 19-39 (SLVS…VISP), 48-68 (LGSL…LVLV), 86-106 (IVGL…LLSF), 143-163 (VTAV…GLGF), 193-213 (FAPL…GFSA), 223-243 (VLLS…VFII), 294-314 (IPLG…VLTL), 322-342 (IEVS…SACG), and 367-387 (VAMQ…SAET).

Belongs to the dicarboxylate/amino acid:cation symporter (DAACS) (TC 2.A.23) family.

The protein resides in the cell inner membrane. It catalyses the reaction L-serine(in) + Na(+)(in) = L-serine(out) + Na(+)(out). The catalysed reaction is L-threonine(in) + Na(+)(in) = L-threonine(out) + Na(+)(out). Its function is as follows. Involved in the import of serine and threonine into the cell, with the concomitant import of sodium (symport system). The sequence is that of Serine/threonine transporter SstT from Colwellia psychrerythraea (strain 34H / ATCC BAA-681) (Vibrio psychroerythus).